The chain runs to 245 residues: 5-oxoprolinase subunit A (245 aa).

Belongs to the LamB/PxpA family. As to quaternary structure, forms a complex composed of PxpA, PxpB and PxpC.

The enzyme catalyses 5-oxo-L-proline + ATP + 2 H2O = L-glutamate + ADP + phosphate + H(+). Its function is as follows. Catalyzes the cleavage of 5-oxoproline to form L-glutamate coupled to the hydrolysis of ATP to ADP and inorganic phosphate. The protein is 5-oxoprolinase subunit A of Haemophilus influenzae (strain PittGG).